We begin with the raw amino-acid sequence, 476 residues long: Nyctalopin (476 aa).

The first 18 residues, 1–18 (MLVLLLHAVVLGLPSAWA), serve as a signal peptide directing secretion. LRR repeat units lie at residues 60 to 84 (VSIDLDRNGLRFLGERAFGTLPSLR), 85 to 108 (RLSLRHNNLSFITPGAFKGLPRLA), 110 to 133 (LRLAHNGDLRYLHARTFAALSRLR), 134 to 157 (RLDLAACRLFSVPERLLAELPALR), 159 to 181 (LAAFDNLFRRVPGALRGLANLTH), 182 to 204 (AHLERGRIEAVASSSLQGLRRLR), 205 to 228 (SLSLQANRVRAVHAGAFGDCGVLE), 229 to 252 (HLLLNDNLLAELPADAFRGLRRLR), 254 to 276 (LNLGGNALDRVARAWFADLAELE), 277 to 300 (LLYLDRNSIAFVEEGAFQNLSGLL), and 302 to 324 (LHLNGNRLTVLAWVAFQPGFFLG). A glycan (N-linked (GlcNAc...) asparagine) is linked at Asn92. N-linked (GlcNAc...) asparagine glycosylation is present at Asn178. The N-linked (GlcNAc...) asparagine glycan is linked to Asn295. Positions 336–387 (DCRLEWLRDWMEGSGRVTDVPCASPGSVAGLDLSQVTFGRSSDGLCVDPEEL) constitute an LRRCT domain. N-linked (GlcNAc...) asparagine glycosylation is found at Asn388, Asn427, and Asn434.

It belongs to the small leucine-rich proteoglycan (SLRP) family. SLRP class IV subfamily. As to expression, expressed in kidney and retina. Also at low levels in brain, testis and muscle. Within the retina, expressed in the inner segment of photoreceptors, outer and inner nuclear layers and the ganglion cell layer.

The protein resides in the secreted. It is found in the extracellular space. Its subcellular location is the extracellular matrix. The chain is Nyctalopin (NYX) from Homo sapiens (Human).